Consider the following 692-residue polypeptide: Hexamerin-1.1 (692 aa).

Positions 1–18 are cleaved as a signal peptide; the sequence is MKLLILAVAISLAVLASG. The N-linked (GlcNAc...) asparagine glycan is linked to Asn-203.

Belongs to the hemocyanin family. As to quaternary structure, homohexamer. In terms of tissue distribution, larval fat body.

The protein resides in the secreted. The protein localises to the extracellular space. In terms of biological role, larval storage protein (LSP) which may serve as a store of amino acids for synthesis of adult proteins. The polypeptide is Hexamerin-1.1 (HexA) (Anopheles gambiae (African malaria mosquito)).